Here is a 409-residue protein sequence, read N- to C-terminus: Arginine deiminase (409 aa).

Cys399 acts as the Amidino-cysteine intermediate in catalysis.

This sequence belongs to the arginine deiminase family.

The protein resides in the cytoplasm. It carries out the reaction L-arginine + H2O = L-citrulline + NH4(+). The protein operates within amino-acid degradation; L-arginine degradation via ADI pathway; carbamoyl phosphate from L-arginine: step 1/2. The sequence is that of Arginine deiminase (arcA) from Latilactobacillus sakei (Lactobacillus sakei).